The chain runs to 248 residues: 4-hydroxy-tetrahydrodipicolinate reductase (248 aa).

NAD(+)-binding positions include 9-14 (GAQGRV), 77-79 (GTT), and 104-107 (APNF). The active-site Proton donor/acceptor is histidine 134. Histidine 135 lines the (S)-2,3,4,5-tetrahydrodipicolinate pocket. Lysine 138 acts as the Proton donor in catalysis. 144-145 (GT) is a binding site for (S)-2,3,4,5-tetrahydrodipicolinate. The tract at residues 157-176 (RREAGMPTQPDATEQSLDGA) is disordered.

Belongs to the DapB family.

The protein resides in the cytoplasm. The catalysed reaction is (S)-2,3,4,5-tetrahydrodipicolinate + NAD(+) + H2O = (2S,4S)-4-hydroxy-2,3,4,5-tetrahydrodipicolinate + NADH + H(+). The enzyme catalyses (S)-2,3,4,5-tetrahydrodipicolinate + NADP(+) + H2O = (2S,4S)-4-hydroxy-2,3,4,5-tetrahydrodipicolinate + NADPH + H(+). Its pathway is amino-acid biosynthesis; L-lysine biosynthesis via DAP pathway; (S)-tetrahydrodipicolinate from L-aspartate: step 4/4. Its function is as follows. Catalyzes the conversion of 4-hydroxy-tetrahydrodipicolinate (HTPA) to tetrahydrodipicolinate. The sequence is that of 4-hydroxy-tetrahydrodipicolinate reductase from Corynebacterium diphtheriae (strain ATCC 700971 / NCTC 13129 / Biotype gravis).